The chain runs to 321 residues: Corticotropin-releasing factor-binding protein (321 aa).

Residues 1–21 (MTPASRPDWCLILLFLAVLRG) form the signal peptide. Cystine bridges form between cysteine 59/cysteine 80, cysteine 103/cysteine 140, cysteine 182/cysteine 204, cysteine 237/cysteine 264, and cysteine 277/cysteine 317. A glycan (N-linked (GlcNAc...) asparagine) is linked at asparagine 203.

The protein belongs to the CRF-binding protein family.

Its subcellular location is the secreted. In terms of biological role, binds CRF and inactivates it. May prevent inappropriate pituitary-adrenal stimulation in pregnancy. The polypeptide is Corticotropin-releasing factor-binding protein (crhbp) (Xenopus laevis (African clawed frog)).